The following is a 73-amino-acid chain: uncharacterized protein (73 aa).

This is an uncharacterized protein from Enterobacteria phage RB18 (Bacteriophage RB18).